The chain runs to 209 residues: Chromophore lyase CpcT/CpeT 1 (209 aa).

The protein belongs to the CpcT/CpeT biliprotein lyase family.

Covalently attaches a chromophore to Cys residue(s) of phycobiliproteins. The chain is Chromophore lyase CpcT/CpeT 1 from Trichodesmium erythraeum (strain IMS101).